We begin with the raw amino-acid sequence, 194 residues long: Thymidine kinase (194 aa).

Residues 15–22 (GSMFSGKS) and 88–91 (DEVQ) each bind ATP. The Proton acceptor role is filled by Glu-89. Cys-145, Cys-148, Cys-183, and Cys-186 together coordinate Zn(2+).

This sequence belongs to the thymidine kinase family. In terms of assembly, homotetramer.

The protein localises to the cytoplasm. It carries out the reaction thymidine + ATP = dTMP + ADP + H(+). The chain is Thymidine kinase from Bacillus cereus (strain AH820).